Consider the following 305-residue polypeptide: Tyrosine recombinase XerC (305 aa).

In terms of domain architecture, Core-binding (CB) spans threonine 4 to glutamate 95. The Tyr recombinase domain occupies leucine 116–threonine 298. Active-site residues include arginine 159, lysine 182, histidine 250, arginine 253, and histidine 276. Tyrosine 285 acts as the O-(3'-phospho-DNA)-tyrosine intermediate in catalysis.

It belongs to the 'phage' integrase family. XerC subfamily. In terms of assembly, forms a cyclic heterotetrameric complex composed of two molecules of XerC and two molecules of XerD.

It is found in the cytoplasm. Its function is as follows. Site-specific tyrosine recombinase, which acts by catalyzing the cutting and rejoining of the recombining DNA molecules. The XerC-XerD complex is essential to convert dimers of the bacterial chromosome into monomers to permit their segregation at cell division. It also contributes to the segregational stability of plasmids. This is Tyrosine recombinase XerC from Rickettsia massiliae (strain Mtu5).